Consider the following 215-residue polypeptide: Deoxyribose-phosphate aldolase (215 aa).

Asp-90 acts as the Proton donor/acceptor in catalysis. The active-site Schiff-base intermediate with acetaldehyde is Lys-152. Lys-181 (proton donor/acceptor) is an active-site residue.

This sequence belongs to the DeoC/FbaB aldolase family. DeoC type 1 subfamily.

Its subcellular location is the cytoplasm. It catalyses the reaction 2-deoxy-D-ribose 5-phosphate = D-glyceraldehyde 3-phosphate + acetaldehyde. Its pathway is carbohydrate degradation; 2-deoxy-D-ribose 1-phosphate degradation; D-glyceraldehyde 3-phosphate and acetaldehyde from 2-deoxy-alpha-D-ribose 1-phosphate: step 2/2. Functionally, catalyzes a reversible aldol reaction between acetaldehyde and D-glyceraldehyde 3-phosphate to generate 2-deoxy-D-ribose 5-phosphate. The protein is Deoxyribose-phosphate aldolase of Ureaplasma urealyticum serovar 10 (strain ATCC 33699 / Western).